We begin with the raw amino-acid sequence, 101 residues long: NAD(P)H-quinone oxidoreductase subunit 4L, chloroplastic (101 aa).

3 helical membrane passes run 2–22, 27–46, and 61–81; these read MLEH…YGLI, MVRA…MNLI, and IFSI…PAIV.

This sequence belongs to the complex I subunit 4L family. In terms of assembly, NDH is composed of at least 16 different subunits, 5 of which are encoded in the nucleus.

The protein resides in the plastid. It is found in the chloroplast thylakoid membrane. The enzyme catalyses a plastoquinone + NADH + (n+1) H(+)(in) = a plastoquinol + NAD(+) + n H(+)(out). It carries out the reaction a plastoquinone + NADPH + (n+1) H(+)(in) = a plastoquinol + NADP(+) + n H(+)(out). NDH shuttles electrons from NAD(P)H:plastoquinone, via FMN and iron-sulfur (Fe-S) centers, to quinones in the photosynthetic chain and possibly in a chloroplast respiratory chain. The immediate electron acceptor for the enzyme in this species is believed to be plastoquinone. Couples the redox reaction to proton translocation, and thus conserves the redox energy in a proton gradient. The sequence is that of NAD(P)H-quinone oxidoreductase subunit 4L, chloroplastic from Drimys granadensis.